The chain runs to 360 residues: Protein Wnt-2 (360 aa).

Residues 1–37 (MIPRRSCWLILLLNLLNVQSLLDASWWSTVAQLSTAL) form the signal peptide. 11 disulfide bridges follow: Cys-80–Cys-91, Cys-130–Cys-138, Cys-140–Cys-158, Cys-213–Cys-227, Cys-215–Cys-222, Cys-289–Cys-320, Cys-305–Cys-315, Cys-319–Cys-359, Cys-335–Cys-350, Cys-337–Cys-347, and Cys-342–Cys-343. N-linked (GlcNAc...) asparagine glycosylation occurs at Asn-90. Ser-219 is lipidated: O-palmitoleoyl serine; by mom-1. Asn-352 carries N-linked (GlcNAc...) asparagine glycosylation.

The protein belongs to the Wnt family. Post-translationally, palmitoleoylation is required for efficient binding to frizzled receptors. Depalmitoleoylation leads to Wnt signaling pathway inhibition. Expressed in intestine, pharynx, anterior body wall muscle, vulva, some pharyngeal neurons and SMD head neurons. Expressed along the boundary between the intestine and muscle or hypodermis, but is also expressed in the hypodermis in cells including seam cells.

The protein localises to the secreted. Its subcellular location is the extracellular space. It localises to the extracellular matrix. Its function is as follows. Ligand for members of the frizzled family of seven transmembrane receptors. Probable developmental protein. May be a signaling molecule which affects the development of discrete regions of tissues. Is likely to signal over only few cell diameters. Involved in the correct positioning of the developing nerve ring and in axon guidance of SIA and SIB neurons, probably by binding to tyrosine kinase receptor cam-1. In addition, regulates the positioning of some head neuronal cells, muscle arms associated with the nerve ring and the excretory pore. Together with Wnt ligand cwn-1, regulates the migration of CAN, ALM, BDU and HSN neurons during embryogenesis, the migration of QL and QR neuroblast descendants during larval development, and polarity of ALM neurons. May act through the wnt receptor cfz-2 to regulate QR neuroblast descendant migration, and to direct ALM migration. Also plays a role in axon growth and guidance in HSN and male CP neurons. In addition, together with wnt ligand cwn-1, negatively regulates developmental neurite pruning of AIM neurons probably by acting as a ligand for receptor tyrosine kinase cam-1. Through the cam-1 receptor also probably regulates the outgrowth of neurites from RME GABAergic motor neurons. May act redundantly with other Wnt ligands such as cwn-1 and mom-2 to control seam cell polarity. The sequence is that of Protein Wnt-2 from Caenorhabditis elegans.